Consider the following 695-residue polypeptide: UvrABC system protein C (695 aa).

Residues 1–10 (MNHDPAETRD) are compositionally biased toward basic and acidic residues. The segment at 1 to 44 (MNHDPAETRDTAAAPLADTESPSPVSPELTPHPAPAAQDIDTAT) is disordered. Positions 88–166 (TSPGVYRMLN…IKQLRPRFNV (79 aa)) constitute a GIY-YIG domain. Residues 276–311 (RAVKQELAVEMEKASNELEFETAALYRDRLAALSAI) enclose the UVR domain.

The protein belongs to the UvrC family. As to quaternary structure, interacts with UvrB in an incision complex.

Its subcellular location is the cytoplasm. Functionally, the UvrABC repair system catalyzes the recognition and processing of DNA lesions. UvrC both incises the 5' and 3' sides of the lesion. The N-terminal half is responsible for the 3' incision and the C-terminal half is responsible for the 5' incision. The chain is UvrABC system protein C from Rhodopseudomonas palustris (strain HaA2).